The following is a 139-amino-acid chain: FAD synthase (139 aa).

Residues Thr-9–Phe-10, His-14–His-17, and Asp-92 contribute to the ATP site.

Belongs to the archaeal FAD synthase family. As to quaternary structure, homodimer. It depends on a divalent metal cation as a cofactor.

The enzyme catalyses FMN + ATP + H(+) = FAD + diphosphate. The protein operates within cofactor biosynthesis; FAD biosynthesis; FAD from FMN: step 1/1. In terms of biological role, catalyzes the transfer of the AMP portion of ATP to flavin mononucleotide (FMN) to produce flavin adenine dinucleotide (FAD) coenzyme. This is FAD synthase from Methanosarcina barkeri (strain Fusaro / DSM 804).